Reading from the N-terminus, the 113-residue chain is MFPYKIVDDVVILMPNKELNIENAHLFKKWVFDEFLNKGYNKIFLVLSDVESIDSFSLGVIVNILKSISSSGGFFALVSPNEKVERVLSLTNLDRIVKIYDTISEAMEEVRRK.

The region spanning 1 to 110 (MFPYKIVDDV…DTISEAMEEV (110 aa)) is the STAS domain. Serine 55 is modified (phosphoserine).

Belongs to the anti-sigma-factor antagonist family. Post-translationally, phosphorylated on a serine residue.

In the phosphorylated form it could act as an anti-anti-sigma factor that counteracts an anti-sigma factor and thus releases a sigma factor from inhibition. In Thermotoga maritima (strain ATCC 43589 / DSM 3109 / JCM 10099 / NBRC 100826 / MSB8), this protein is Putative anti-sigma factor antagonist TM_1081.